The chain runs to 310 residues: Beta-lactamase AST-1 (310 aa).

A signal peptide spans 1–31; the sequence is MTFSALPFRRADRRRLLAAALAACALTLTAA. Cys-32 carries N-palmitoyl cysteine lipidation. Cys-32 carries S-diacylglycerol cysteine lipidation. The Acyl-ester intermediate role is filled by Ser-91. Ser-151 serves as a coordination point for substrate. Glu-187 functions as the Proton acceptor in the catalytic mechanism. Residue 255 to 257 participates in substrate binding; the sequence is KTG.

Belongs to the class-A beta-lactamase family.

Its subcellular location is the cell membrane. The enzyme catalyses a beta-lactam + H2O = a substituted beta-amino acid. Its activity is regulated as follows. Inhibited by clavulanic acid. Confers high levels of resistance to amoxicillin, benzylpenicillin, piperacillin, ticarcillin and cephalothin. Not active against ceftazidime, cefotaxime and aztreonam. In Nocardia asteroides, this protein is Beta-lactamase AST-1 (bla).